Reading from the N-terminus, the 835-residue chain is Protein translocase subunit SecA (835 aa).

Residues Q85, 103 to 107 (GEGKT), and D492 each bind ATP. Residues 788–807 (VQGEAVHPSSDGEEAKKKPV) form a disordered region. Residues C819, C821, C830, and C831 each coordinate Zn(2+).

Belongs to the SecA family. As to quaternary structure, monomer and homodimer. Part of the essential Sec protein translocation apparatus which comprises SecA, SecYEG and auxiliary proteins SecDF. Other proteins may also be involved. Requires Zn(2+) as cofactor.

Its subcellular location is the cell membrane. The protein resides in the cytoplasm. The catalysed reaction is ATP + H2O + cellular proteinSide 1 = ADP + phosphate + cellular proteinSide 2.. Its function is as follows. Part of the Sec protein translocase complex. Interacts with the SecYEG preprotein conducting channel. Has a central role in coupling the hydrolysis of ATP to the transfer of proteins into and across the cell membrane, serving as an ATP-driven molecular motor driving the stepwise translocation of polypeptide chains across the membrane. The sequence is that of Protein translocase subunit SecA from Bacillus cereus (strain ATCC 14579 / DSM 31 / CCUG 7414 / JCM 2152 / NBRC 15305 / NCIMB 9373 / NCTC 2599 / NRRL B-3711).